The following is a 294-amino-acid chain: Large ribosomal subunit protein uL18B (294 aa).

The protein belongs to the universal ribosomal protein uL18 family. As to quaternary structure, component of the large ribosomal subunit (LSU). Mature yeast ribosomes consist of a small (40S) and a large (60S) subunit. The 40S small subunit contains 1 molecule of ribosomal RNA (18S rRNA) and 33 different proteins (encoded by 57 genes). The large 60S subunit contains 3 rRNA molecules (25S, 5.8S and 5S rRNA) and 46 different proteins (encoded by 81 genes). Component of a hexameric 5S RNP precursor complex, composed of 5S RNA, rrs1, rpf2, rpl5a/rpl5b, rpl11a/rpl11b and syo1; this complex acts as a precursor for ribosome assembly. rpl5a/rpl5b/uL18 forms a heterotrimeric complex with syo1 and rpl11a/rpl11b/uL5. Interaction of this complex with KAP104 allows the nuclear import of the heterotrimer.

The protein localises to the cytoplasm. It localises to the nucleus. Functionally, component of the ribosome, a large ribonucleoprotein complex responsible for the synthesis of proteins in the cell. The small ribosomal subunit (SSU) binds messenger RNAs (mRNAs) and translates the encoded message by selecting cognate aminoacyl-transfer RNA (tRNA) molecules. The large subunit (LSU) contains the ribosomal catalytic site termed the peptidyl transferase center (PTC), which catalyzes the formation of peptide bonds, thereby polymerizing the amino acids delivered by tRNAs into a polypeptide chain. The nascent polypeptides leave the ribosome through a tunnel in the LSU and interact with protein factors that function in enzymatic processing, targeting, and the membrane insertion of nascent chains at the exit of the ribosomal tunnel. In Schizosaccharomyces pombe (strain 972 / ATCC 24843) (Fission yeast), this protein is Large ribosomal subunit protein uL18B (rpl502).